A 366-amino-acid polypeptide reads, in one-letter code: MTPEHLPTEQYEAQLAEKVVRLQTMMAPFAAPVPEVFRSPVSHYRMRAEFRLWHDGDDLYHIIFDQQTRSRIRVDSFPAASALINQLMTAMLEGVRNNPVLRQKLFQIDYLTTLSNQAVVSVLYHKKLDDAWREQAEALRDALRAQGLNVHLIGRATKTKIELDQDYIDERLPVGGREMIYRQVENSFTQPNAAMNIQMLEWALDVTKGATGDLLELYCGNGNFSLALARNFDRVLATEIAKPSVAAAQYNIAANHIDNVQIIRMAAEEFTQAMNGVRQFNRLQGIDLHSYQCETIFVDPPRSGLDSETEKMVQAYPRILYISCNPETLCRNLETLSQTHNVTRLALFDQFPYTHHMECGVLLTRK.

S-adenosyl-L-methionine is bound by residues Gln190, Tyr218, Asn223, Glu239, and Asp299. The active-site Nucleophile is the Cys324. The active-site Proton acceptor is the Glu358.

This sequence belongs to the class I-like SAM-binding methyltransferase superfamily. RNA M5U methyltransferase family. TrmA subfamily.

It catalyses the reaction uridine(54) in tRNA + S-adenosyl-L-methionine = 5-methyluridine(54) in tRNA + S-adenosyl-L-homocysteine + H(+). The enzyme catalyses uridine(341) in tmRNA + S-adenosyl-L-methionine = 5-methyluridine(341) in tmRNA + S-adenosyl-L-homocysteine + H(+). Dual-specificity methyltransferase that catalyzes the formation of 5-methyluridine at position 54 (m5U54) in all tRNAs, and that of position 341 (m5U341) in tmRNA (transfer-mRNA). In Klebsiella pneumoniae subsp. pneumoniae (strain ATCC 700721 / MGH 78578), this protein is tRNA/tmRNA (uracil-C(5))-methyltransferase.